We begin with the raw amino-acid sequence, 337 residues long: Serpentine receptor class alpha-17 (337 aa).

Transmembrane regions (helical) follow at residues L28–I48, E110–F130, I155–V175, F197–V217, C247–I267, and I282–F302.

The protein belongs to the nematode receptor-like protein sra family.

The protein resides in the membrane. The protein is Serpentine receptor class alpha-17 (sra-17) of Caenorhabditis elegans.